The primary structure comprises 905 residues: DNA mismatch repair protein MutS (905 aa).

The interval 272 to 292 (KKPPLSPPSREATGSTMAIDP) is disordered. ATP is bound at residue 654–661 (GPNMAGKS).

Belongs to the DNA mismatch repair MutS family.

In terms of biological role, this protein is involved in the repair of mismatches in DNA. It is possible that it carries out the mismatch recognition step. This protein has a weak ATPase activity. This is DNA mismatch repair protein MutS from Rhodopseudomonas palustris (strain BisB18).